Reading from the N-terminus, the 472-residue chain is Adenosylhomocysteinase (472 aa).

Substrate contacts are provided by Thr62, Asp137, and Glu197. Thr198 to Thr200 provides a ligand contact to NAD(+). The substrate site is built by Lys227 and Asp231. Residues Asn232, Gly261 to Gly266, Glu284, Asn319, Ile340 to His342, and Asn385 contribute to the NAD(+) site.

This sequence belongs to the adenosylhomocysteinase family. NAD(+) serves as cofactor.

It localises to the cytoplasm. It catalyses the reaction S-adenosyl-L-homocysteine + H2O = L-homocysteine + adenosine. It participates in amino-acid biosynthesis; L-homocysteine biosynthesis; L-homocysteine from S-adenosyl-L-homocysteine: step 1/1. Functionally, may play a key role in the regulation of the intracellular concentration of adenosylhomocysteine. This Bordetella pertussis (strain Tohama I / ATCC BAA-589 / NCTC 13251) protein is Adenosylhomocysteinase.